A 509-amino-acid polypeptide reads, in one-letter code: Steroid 17-alpha-hydroxylase/17,20 lyase (509 aa).

Asn-202 serves as a coordination point for substrate. Cys-442 serves as a coordination point for heme.

Belongs to the cytochrome P450 family. Heme is required as a cofactor.

The protein localises to the endoplasmic reticulum membrane. It is found in the microsome membrane. It carries out the reaction a C21-steroid + reduced [NADPH--hemoprotein reductase] + O2 = a 17alpha-hydroxy-C21-steroid + oxidized [NADPH--hemoprotein reductase] + H2O + H(+). The enzyme catalyses progesterone + reduced [NADPH--hemoprotein reductase] + O2 = 17alpha-hydroxyprogesterone + oxidized [NADPH--hemoprotein reductase] + H2O + H(+). The catalysed reaction is pregnenolone + reduced [NADPH--hemoprotein reductase] + O2 = 17alpha-hydroxypregnenolone + oxidized [NADPH--hemoprotein reductase] + H2O + H(+). It catalyses the reaction 17alpha-hydroxyprogesterone + reduced [NADPH--hemoprotein reductase] + O2 = androst-4-ene-3,17-dione + acetate + oxidized [NADPH--hemoprotein reductase] + H2O + 2 H(+). It carries out the reaction 17alpha-hydroxyprogesterone + reduced [NADPH--hemoprotein reductase] + O2 = 16alpha,17alpha-dihydroxyprogesterone + oxidized [NADPH--hemoprotein reductase] + H2O + H(+). The enzyme catalyses 16alpha,17alpha-dihydroxyprogesterone + reduced [NADPH--hemoprotein reductase] + O2 = 6beta,16alpha,17alpha-trihydroxyprogesterone + oxidized [NADPH--hemoprotein reductase] + H2O + H(+). The catalysed reaction is 17alpha-hydroxypregnenolone + reduced [NADPH--hemoprotein reductase] + O2 = 3beta-hydroxyandrost-5-en-17-one + acetate + oxidized [NADPH--hemoprotein reductase] + H2O + 2 H(+). It catalyses the reaction 16alpha,17alpha-dihydroxypregnenolone + reduced [NADPH--hemoprotein reductase] + O2 = 3beta,16alpha-dihydroxy-androst-5-en-17-one + acetate + oxidized [NADPH--hemoprotein reductase] + H2O + 2 H(+). It carries out the reaction 3beta-hydroxyandrost-5-en-17-one + reduced [NADPH--hemoprotein reductase] + O2 = 3beta,16alpha-dihydroxy-androst-5-en-17-one + oxidized [NADPH--hemoprotein reductase] + H2O + H(+). The enzyme catalyses androst-4-ene-3,17-dione + reduced [NADPH--hemoprotein reductase] + O2 = 16alpha-hydroxyandrost-4-ene-3,17-dione + oxidized [NADPH--hemoprotein reductase] + H2O + H(+). Its pathway is steroid hormone biosynthesis. It functions in the pathway steroid biosynthesis; glucocorticoid biosynthesis. Its activity is regulated as follows. Regulated predominantly by intracellular cAMP levels. The 17,20-lyase activity is stimulated by cytochrome b5, which acts as an allosteric effector increasing the Vmax of the lyase activity. A cytochrome P450 monooxygenase involved in corticoid and androgen biosynthesis. Catalyzes 17-alpha hydroxylation of C21 steroids, which is common for both pathways. A second oxidative step, required only for androgen synthesis, involves an acyl-carbon cleavage. The 17-alpha hydroxy intermediates, as part of adrenal glucocorticoids biosynthesis pathway, are precursors of cortisol. Hydroxylates steroid hormones, pregnenolone and progesterone to form 17-alpha hydroxy metabolites, followed by the cleavage of the C17-C20 bond to form C19 steroids, dehydroepiandrosterone (DHEA) and androstenedione. Has 16-alpha hydroxylase activity. Catalyzes 16-alpha hydroxylation of 17-alpha hydroxy pregnenolone, followed by the cleavage of the C17-C20 bond to form 16-alpha-hydroxy DHEA. Also 16-alpha hydroxylates androgens, relevant for estriol synthesis. Mechanistically, uses molecular oxygen inserting one oxygen atom into a substrate, and reducing the second into a water molecule, with two electrons provided by NADPH via cytochrome P450 reductase (CPR; NADPH-ferrihemoprotein reductase). The chain is Steroid 17-alpha-hydroxylase/17,20 lyase (CYP17A1) from Ovis aries (Sheep).